A 141-amino-acid chain; its full sequence is HTH-type transcriptional repressor NsrR (141 aa).

An HTH rrf2-type domain is found at 2-129; sequence QLTSFTDYAL…DDCTIEELLS (128 aa). Positions 28 to 51 form a DNA-binding region, H-T-H motif; the sequence is ITEVTDLFGVSRNHMVKVINRLGQ. The [2Fe-2S] cluster site is built by Cys-91, Cys-96, and Cys-102.

The cofactor is [2Fe-2S] cluster.

Functionally, nitric oxide-sensitive repressor of genes involved in protecting the cell against nitrosative stress. May require iron for activity. The sequence is that of HTH-type transcriptional repressor NsrR from Vibrio campbellii (strain ATCC BAA-1116).